Consider the following 218-residue polypeptide: Guanylate kinase (218 aa).

Residues 10–190 (GLLIILSSPS…TEERLKTIIT (181 aa)) enclose the Guanylate kinase-like domain. Position 17–24 (17–24 (SPSGAGKS)) interacts with ATP.

It belongs to the guanylate kinase family.

The protein resides in the cytoplasm. The catalysed reaction is GMP + ATP = GDP + ADP. Essential for recycling GMP and indirectly, cGMP. This is Guanylate kinase from Jannaschia sp. (strain CCS1).